The sequence spans 305 residues: Serine/threonine-protein phosphatase PP2A catalytic subunit (305 aa).

Mn(2+) contacts are provided by Asp53, His55, Asp81, and Asn113. Catalysis depends on His114, which acts as the Proton donor. Residues His163 and His237 each coordinate Mn(2+).

It belongs to the PPP phosphatase family. PP-2A subfamily. The cofactor is Mn(2+).

The catalysed reaction is O-phospho-L-seryl-[protein] + H2O = L-seryl-[protein] + phosphate. It catalyses the reaction O-phospho-L-threonyl-[protein] + H2O = L-threonyl-[protein] + phosphate. This chain is Serine/threonine-protein phosphatase PP2A catalytic subunit, found in Helianthus annuus (Common sunflower).